The primary structure comprises 390 residues: Phosphopentomutase (390 aa).

6 residues coordinate Mn(2+): Asp-10, Asp-284, His-289, Asp-325, His-326, and His-337.

The protein belongs to the phosphopentomutase family. Mn(2+) serves as cofactor.

Its subcellular location is the cytoplasm. The enzyme catalyses 2-deoxy-alpha-D-ribose 1-phosphate = 2-deoxy-D-ribose 5-phosphate. It catalyses the reaction alpha-D-ribose 1-phosphate = D-ribose 5-phosphate. It functions in the pathway carbohydrate degradation; 2-deoxy-D-ribose 1-phosphate degradation; D-glyceraldehyde 3-phosphate and acetaldehyde from 2-deoxy-alpha-D-ribose 1-phosphate: step 1/2. Functionally, isomerase that catalyzes the conversion of deoxy-ribose 1-phosphate (dRib-1-P) and ribose 1-phosphate (Rib-1-P) to deoxy-ribose 5-phosphate (dRib-5-P) and ribose 5-phosphate (Rib-5-P), respectively. This chain is Phosphopentomutase, found in Clostridioides difficile (strain 630) (Peptoclostridium difficile).